We begin with the raw amino-acid sequence, 313 residues long: Porphobilinogen deaminase (313 aa).

Cysteine 242 carries the S-(dipyrrolylmethanemethyl)cysteine modification.

This sequence belongs to the HMBS family. In terms of assembly, monomer. Dipyrromethane serves as cofactor.

The catalysed reaction is 4 porphobilinogen + H2O = hydroxymethylbilane + 4 NH4(+). The protein operates within porphyrin-containing compound metabolism; protoporphyrin-IX biosynthesis; coproporphyrinogen-III from 5-aminolevulinate: step 2/4. In terms of biological role, tetrapolymerization of the monopyrrole PBG into the hydroxymethylbilane pre-uroporphyrinogen in several discrete steps. This chain is Porphobilinogen deaminase, found in Yersinia pseudotuberculosis serotype IB (strain PB1/+).